Consider the following 616-residue polypeptide: Dihydroxy-acid dehydratase (616 aa).

D81 contributes to the Mg(2+) binding site. C122 serves as a coordination point for [2Fe-2S] cluster. D123 and K124 together coordinate Mg(2+). K124 carries the N6-carboxylysine modification. Position 195 (C195) interacts with [2Fe-2S] cluster. E491 contributes to the Mg(2+) binding site. The active-site Proton acceptor is the S517.

This sequence belongs to the IlvD/Edd family. As to quaternary structure, homodimer. The cofactor is [2Fe-2S] cluster. Mg(2+) serves as cofactor.

The catalysed reaction is (2R)-2,3-dihydroxy-3-methylbutanoate = 3-methyl-2-oxobutanoate + H2O. The enzyme catalyses (2R,3R)-2,3-dihydroxy-3-methylpentanoate = (S)-3-methyl-2-oxopentanoate + H2O. It functions in the pathway amino-acid biosynthesis; L-isoleucine biosynthesis; L-isoleucine from 2-oxobutanoate: step 3/4. The protein operates within amino-acid biosynthesis; L-valine biosynthesis; L-valine from pyruvate: step 3/4. Functions in the biosynthesis of branched-chain amino acids. Catalyzes the dehydration of (2R,3R)-2,3-dihydroxy-3-methylpentanoate (2,3-dihydroxy-3-methylvalerate) into 2-oxo-3-methylpentanoate (2-oxo-3-methylvalerate) and of (2R)-2,3-dihydroxy-3-methylbutanoate (2,3-dihydroxyisovalerate) into 2-oxo-3-methylbutanoate (2-oxoisovalerate), the penultimate precursor to L-isoleucine and L-valine, respectively. In Escherichia coli O7:K1 (strain IAI39 / ExPEC), this protein is Dihydroxy-acid dehydratase.